A 760-amino-acid chain; its full sequence is 5-methyltetrahydropteroyltriglutamate--homocysteine methyltransferase (760 aa).

5-methyltetrahydropteroyltri-L-glutamate contacts are provided by residues 17-20 and K113; that span reads RELK. L-homocysteine-binding positions include 433-435 and E486; that span reads IGS. Residues 433–435 and E486 contribute to the L-methionine site; that span reads IGS. 5-methyltetrahydropteroyltri-L-glutamate-binding positions include 517–518 and W563; that span reads RC. D601 lines the L-homocysteine pocket. Position 601 (D601) interacts with L-methionine. E607 serves as a coordination point for 5-methyltetrahydropteroyltri-L-glutamate. Zn(2+) is bound by residues H643, C645, and E667. H696 (proton donor) is an active-site residue. Residue C728 coordinates Zn(2+).

The protein belongs to the vitamin-B12 independent methionine synthase family. Requires Zn(2+) as cofactor.

The enzyme catalyses 5-methyltetrahydropteroyltri-L-glutamate + L-homocysteine = tetrahydropteroyltri-L-glutamate + L-methionine. It participates in amino-acid biosynthesis; L-methionine biosynthesis via de novo pathway; L-methionine from L-homocysteine (MetE route): step 1/1. Functionally, catalyzes the transfer of a methyl group from 5-methyltetrahydrofolate to homocysteine resulting in methionine formation. The chain is 5-methyltetrahydropteroyltriglutamate--homocysteine methyltransferase from Chromobacterium violaceum (strain ATCC 12472 / DSM 30191 / JCM 1249 / CCUG 213 / NBRC 12614 / NCIMB 9131 / NCTC 9757 / MK).